The sequence spans 231 residues: 2-C-methyl-D-erythritol 4-phosphate cytidylyltransferase (231 aa).

Belongs to the IspD/TarI cytidylyltransferase family. IspD subfamily.

The catalysed reaction is 2-C-methyl-D-erythritol 4-phosphate + CTP + H(+) = 4-CDP-2-C-methyl-D-erythritol + diphosphate. It functions in the pathway isoprenoid biosynthesis; isopentenyl diphosphate biosynthesis via DXP pathway; isopentenyl diphosphate from 1-deoxy-D-xylulose 5-phosphate: step 2/6. Catalyzes the formation of 4-diphosphocytidyl-2-C-methyl-D-erythritol from CTP and 2-C-methyl-D-erythritol 4-phosphate (MEP). The polypeptide is 2-C-methyl-D-erythritol 4-phosphate cytidylyltransferase (Dictyoglomus thermophilum (strain ATCC 35947 / DSM 3960 / H-6-12)).